Consider the following 494-residue polypeptide: Protein DETOXIFICATION 21 (494 aa).

Residue A2 is modified to N-acetylalanine. The next 12 helical transmembrane spans lie at 40–60, 73–95, 123–143, 158–178, 188–208, 217–237, 268–288, 297–317, 340–360, 384–404, 416–436, and 441–461; these read LWIV…VSII, LAAY…LGMA, IVLT…GPIL, IIAL…TCQM, IIAY…WLLM, GAMT…LLFV, GGML…TGNL, ALAI…GFLA, LTAV…FLFL, LLAF…VAVG, LACY…VVGL, and VWIG…VMTL.

It belongs to the multi antimicrobial extrusion (MATE) (TC 2.A.66.1) family.

It is found in the membrane. This chain is Protein DETOXIFICATION 21, found in Arabidopsis thaliana (Mouse-ear cress).